We begin with the raw amino-acid sequence, 263 residues long: Urease accessory protein UreD 1 (263 aa).

This sequence belongs to the UreD family. UreD, UreF and UreG form a complex that acts as a GTP-hydrolysis-dependent molecular chaperone, activating the urease apoprotein by helping to assemble the nickel containing metallocenter of UreC. The UreE protein probably delivers the nickel.

It is found in the cytoplasm. Required for maturation of urease via the functional incorporation of the urease nickel metallocenter. The polypeptide is Urease accessory protein UreD 1 (Synechococcus sp. (strain JA-3-3Ab) (Cyanobacteria bacterium Yellowstone A-Prime)).